The following is a 170-amino-acid chain: Adenine phosphoribosyltransferase (170 aa).

Belongs to the purine/pyrimidine phosphoribosyltransferase family. In terms of assembly, homodimer.

Its subcellular location is the cytoplasm. The enzyme catalyses AMP + diphosphate = 5-phospho-alpha-D-ribose 1-diphosphate + adenine. The protein operates within purine metabolism; AMP biosynthesis via salvage pathway; AMP from adenine: step 1/1. Its function is as follows. Catalyzes a salvage reaction resulting in the formation of AMP, that is energically less costly than de novo synthesis. This Flavobacterium johnsoniae (strain ATCC 17061 / DSM 2064 / JCM 8514 / BCRC 14874 / CCUG 350202 / NBRC 14942 / NCIMB 11054 / UW101) (Cytophaga johnsonae) protein is Adenine phosphoribosyltransferase.